The following is a 143-amino-acid chain: Calcitonin (143 aa).

The N-terminal stretch at 1–25 (MGFGKSSPFLAFSILVLCQAGSLQA) is a signal peptide. A propeptide spanning residues 26 to 84 (TPLRSALETLPDPGALSEKEGRLLLAALVKAYVQRKTNELEQEEEQEETEDSSLDSSRA) is cleaved from the precursor. The residue at position 42 (Ser-42) is a Phosphoserine. A disordered region spans residues 62-86 (TNELEQEEEQEETEDSSLDSSRAKR). Positions 65–78 (LEQEEEQEETEDSS) are enriched in acidic residues. An intrachain disulfide couples Cys-87 to Cys-93. The tract at residues 112–143 (GFGPETPGKKRDIANSLEKDLSSHFGVPTDAN) is disordered. Pro-118 is modified (proline amide). The span at 118-133 (PGKKRDIANSLEKDLS) shows a compositional bias: basic and acidic residues. Positions 122 to 143 (RDIANSLEKDLSSHFGVPTDAN) are excised as a propeptide.

This sequence belongs to the calcitonin family.

Its subcellular location is the secreted. In terms of biological role, calcitonin is a peptide hormone that causes a rapid but short-lived drop in the level of calcium and phosphate in blood by promoting the incorporation of those ions in the bones. Calcitonin function is mediated by the calcitonin receptor/CALCR and the CALCR-RAMP2 (AMYR2) receptor complex. This chain is Calcitonin (CALCA), found in Ovis aries (Sheep).